Reading from the N-terminus, the 910-residue chain is DNA mismatch repair protein MutS (910 aa).

The span at 1–11 (MEAKVEEKEPE) shows a compositional bias: basic and acidic residues. Positions 1–21 (MEAKVEEKEPEPVENAGPDAP) are disordered. Residue 658–665 (GPNMGGKS) coordinates ATP.

It belongs to the DNA mismatch repair MutS family.

Its function is as follows. This protein is involved in the repair of mismatches in DNA. It is possible that it carries out the mismatch recognition step. This protein has a weak ATPase activity. This Brucella suis (strain ATCC 23445 / NCTC 10510) protein is DNA mismatch repair protein MutS.